Reading from the N-terminus, the 190-residue chain is dCTP deaminase, dUMP-forming (190 aa).

DCTP-binding positions include 101-106 (KSSLGR), Asp-119, 127-129 (TLE), Gln-148, Tyr-162, and Gln-174. Glu-129 functions as the Proton donor/acceptor in the catalytic mechanism. The interval 163–190 (GSTRVGSKYQGQRGPTPSRSYQNFITST) is disordered. A compositionally biased stretch (polar residues) spans 171-190 (YQGQRGPTPSRSYQNFITST).

This sequence belongs to the dCTP deaminase family. In terms of assembly, homotrimer.

It catalyses the reaction dCTP + 2 H2O = dUMP + NH4(+) + diphosphate. It functions in the pathway pyrimidine metabolism; dUMP biosynthesis; dUMP from dCTP: step 1/1. Bifunctional enzyme that catalyzes both the deamination of dCTP to dUTP and the hydrolysis of dUTP to dUMP without releasing the toxic dUTP intermediate. The chain is dCTP deaminase, dUMP-forming from Mycolicibacterium paratuberculosis (strain ATCC BAA-968 / K-10) (Mycobacterium paratuberculosis).